The primary structure comprises 359 residues: MSKPPSDPPRRPPAAFTYEDEATERHDNGRQAERRRKPESFSENIVVTADEDDPFLNPDKDLSAVPVATPLRRRTSFGKIAAGAFGILLSLGIGLWTDSLIRDLFTRADWLGYLALAVLAVGVLAVLALVIRETSGMMRLAAVQAIKAEAEAAMVETRPAKARAVVARLVTLLSANPETSKGRATLKATEGEVIDPPHLIALAERELLTPLDRKARALIVNASKRVSLVTAVSPRAVVDLLYVLYEAVRLIRAMAELYGGRPGTLGMFRLLRDVLAHLAVTGSIAVGDSLVQQVLGHGLASKLSARLGEGVINGLMTARIGIAAMDLCRPLAFHALKRPGIGDFIGDLTPSMSPRGNTP.

The segment at Met1–Glu43 is disordered. Residues Thr23–Ser40 are compositionally biased toward basic and acidic residues. The next 2 helical transmembrane spans lie at Phe77–Thr97 and Leu111–Ile131.

This sequence belongs to the UPF0283 family.

The protein resides in the cell inner membrane. The polypeptide is UPF0283 membrane protein Rleg2_1967 (Rhizobium leguminosarum bv. trifolii (strain WSM2304)).